The primary structure comprises 118 residues: Large ribosomal subunit protein bL20 (118 aa).

This sequence belongs to the bacterial ribosomal protein bL20 family.

In terms of biological role, binds directly to 23S ribosomal RNA and is necessary for the in vitro assembly process of the 50S ribosomal subunit. It is not involved in the protein synthesizing functions of that subunit. In Yersinia pseudotuberculosis serotype O:1b (strain IP 31758), this protein is Large ribosomal subunit protein bL20.